Reading from the N-terminus, the 265-residue chain is 3-methyl-2-oxobutanoate hydroxymethyltransferase (265 aa).

Mg(2+)-binding residues include Asp-45 and Asp-84. Residues 45–46 (DS), Asp-84, and Lys-112 contribute to the 3-methyl-2-oxobutanoate site. Glu-114 is a Mg(2+) binding site. The active-site Proton acceptor is Glu-181.

The protein belongs to the PanB family. In terms of assembly, homodecamer; pentamer of dimers. It depends on Mg(2+) as a cofactor.

It localises to the cytoplasm. The enzyme catalyses 3-methyl-2-oxobutanoate + (6R)-5,10-methylene-5,6,7,8-tetrahydrofolate + H2O = 2-dehydropantoate + (6S)-5,6,7,8-tetrahydrofolate. The protein operates within cofactor biosynthesis; (R)-pantothenate biosynthesis; (R)-pantoate from 3-methyl-2-oxobutanoate: step 1/2. Catalyzes the reversible reaction in which hydroxymethyl group from 5,10-methylenetetrahydrofolate is transferred onto alpha-ketoisovalerate to form ketopantoate. This is 3-methyl-2-oxobutanoate hydroxymethyltransferase from Yersinia pseudotuberculosis serotype O:1b (strain IP 31758).